The sequence spans 448 residues: Glutamyl-tRNA reductase (448 aa).

Substrate-binding positions include 49–52, serine 109, 114–116, and glutamine 120; these read TCNR and ETQ. The active-site Nucleophile is cysteine 50. 189-194 provides a ligand contact to NADP(+); the sequence is GAGEMG.

The protein belongs to the glutamyl-tRNA reductase family. In terms of assembly, homodimer.

The catalysed reaction is (S)-4-amino-5-oxopentanoate + tRNA(Glu) + NADP(+) = L-glutamyl-tRNA(Glu) + NADPH + H(+). Its pathway is porphyrin-containing compound metabolism; protoporphyrin-IX biosynthesis; 5-aminolevulinate from L-glutamyl-tRNA(Glu): step 1/2. Functionally, catalyzes the NADPH-dependent reduction of glutamyl-tRNA(Glu) to glutamate 1-semialdehyde (GSA). This is Glutamyl-tRNA reductase from Staphylococcus epidermidis (strain ATCC 35984 / DSM 28319 / BCRC 17069 / CCUG 31568 / BM 3577 / RP62A).